An 805-amino-acid chain; its full sequence is Phenylalanine--tRNA ligase beta subunit (805 aa).

Positions 39–154 (SEGLKKVVVG…DDATPGDPVF (116 aa)) constitute a tRNA-binding domain. Residues 410–485 (VQPTTVTIDL…RLYGYDNLPA (76 aa)) enclose the B5 domain. Mg(2+)-binding residues include Asp463, Asp469, Glu472, and Glu473. One can recognise an FDX-ACB domain in the interval 712-805 (SKFPSITRDV…LTDELGAEIR (94 aa)).

The protein belongs to the phenylalanyl-tRNA synthetase beta subunit family. Type 1 subfamily. In terms of assembly, tetramer of two alpha and two beta subunits. Requires Mg(2+) as cofactor.

The protein resides in the cytoplasm. It catalyses the reaction tRNA(Phe) + L-phenylalanine + ATP = L-phenylalanyl-tRNA(Phe) + AMP + diphosphate + H(+). The sequence is that of Phenylalanine--tRNA ligase beta subunit from Lactiplantibacillus plantarum (strain ATCC BAA-793 / NCIMB 8826 / WCFS1) (Lactobacillus plantarum).